We begin with the raw amino-acid sequence, 260 residues long: NH(3)-dependent NAD(+) synthetase (260 aa).

Residue 31–38 participates in ATP binding; it reads GLSGGLDS. Position 37 (D37) interacts with Mg(2+). R112 provides a ligand contact to deamido-NAD(+). T132 lines the ATP pocket. E137 is a binding site for Mg(2+). 2 residues coordinate ATP: K161 and S183.

Belongs to the NAD synthetase family. As to quaternary structure, homodimer.

The catalysed reaction is deamido-NAD(+) + NH4(+) + ATP = AMP + diphosphate + NAD(+) + H(+). It functions in the pathway cofactor biosynthesis; NAD(+) biosynthesis; NAD(+) from deamido-NAD(+) (ammonia route): step 1/1. In terms of biological role, catalyzes the ATP-dependent amidation of deamido-NAD to form NAD. Uses ammonia as a nitrogen source. This Helicobacter pylori (strain P12) protein is NH(3)-dependent NAD(+) synthetase.